Reading from the N-terminus, the 238-residue chain is uncharacterized protein (238 aa).

Transmembrane regions (helical) follow at residues 15–37 (FGAL…VLLP), 50–69 (ARAG…CGTL), 79–96 (LPFH…LYFI), 101–118 (IFFN…VAVL), 128–150 (ILYA…FSLL), 163–183 (CAVL…RRLG), and 203–225 (FFVY…YLPF).

It is found in the cell membrane. This is an uncharacterized protein from Treponema pallidum (strain Nichols).